The sequence spans 91 residues: Teretoxin Tan22.13 (91 aa).

The first 21 residues, 1–21 (MKVQILFALMMVLVTLCLGQK), serve as a signal peptide directing secretion. The propeptide occupies 22–24 (MQR).

It belongs to the teretoxin C (TC) superfamily. Contains 4 disulfide bonds. In terms of tissue distribution, expressed by the venom duct.

The protein localises to the secreted. The sequence is that of Teretoxin Tan22.13 from Terebra anilis (Auger snail).